The sequence spans 334 residues: Leucine-rich repeat-containing protein 39 (334 aa).

LRR repeat units follow at residues 59 to 82, 83 to 105, 106 to 128, 129 to 151, 153 to 175, 176 to 198, 199 to 221, 223 to 244, 245 to 269, and 272 to 295; these read EDGR…LLKL, NQLQ…IGRF, QHLI…IGLL, TRLQ…LSNC, SLEK…LSKL, LKLT…VLDM, PALE…LDRM, SLHT…IRNM, KNLG…EMTS, and FVNF…VDGE.

As to quaternary structure, interacts with MYH7 (via C-terminus). Expressed in heart and skeletal muscle (at protein level). Also detected in kidney (at protein level). Not detected in other tissues tested (at protein level).

The protein resides in the cytoplasm. The protein localises to the myofibril. It localises to the sarcomere. Its subcellular location is the m line. Functionally, component of the sarcomeric M-band which plays a role in myocyte response to biomechanical stress. May regulate expression of other M-band proteins via an SRF-dependent pathway. Important for normal contractile function in heart. The sequence is that of Leucine-rich repeat-containing protein 39 from Rattus norvegicus (Rat).